A 223-amino-acid chain; its full sequence is Ethylene-inducing xylanase (223 aa).

Residues M1–S19 form the signal peptide. Positions Q34–S223 constitute a GH11 domain. An N-linked (GlcNAc...) asparagine glycan is attached at N94. Catalysis depends on E119, which acts as the Nucleophile. The active-site Proton donor is the E210.

It belongs to the glycosyl hydrolase 11 (cellulase G) family. In terms of assembly, interactc with tomato LeEix2 receptor to trigger its internalization.

Its subcellular location is the secreted. It catalyses the reaction Endohydrolysis of (1-&gt;4)-beta-D-xylosidic linkages in xylans.. It participates in glycan degradation; xylan degradation. Endo-1,4-beta-xylanase involved in the hydrolysis of xylan, a major structural heterogeneous polysaccharide found in plant biomass representing the second most abundant polysaccharide in the biosphere, after cellulose. Acts as an elicitor of plant defense responses in hosts such as tobacco (Nicotiana tabacum) or tomato (Solanum lycopersicum). Induces the production of ethylene and leads alterations in membrane function with rapid efflux of potassium, uptake of calcium, alkalization of the medium, increased leakage of cellular components and necrosis in plant hosts. EIX is translocated through the xylem of the host plant to the leaf mesophyll, leading to host response to pathogen-derived extracellular proteins in tissues distant from the invading pathogen. Greatly enhances the expression of two calcineurin B-like proteins-interacting protein kinases (CIPKs) family members, OsCIPK14 and OsCIPK15, in rice cultured cells. In tomato, triggers the defense response via binding to and subsequent internalization of the LeEix2 receptor. This chain is Ethylene-inducing xylanase, found in Hypocrea rufa (Trichoderma viride).